The chain runs to 59 residues: Large ribosomal subunit protein uL30 (59 aa).

Belongs to the universal ribosomal protein uL30 family. In terms of assembly, part of the 50S ribosomal subunit.

In Aliivibrio salmonicida (strain LFI1238) (Vibrio salmonicida (strain LFI1238)), this protein is Large ribosomal subunit protein uL30.